The following is a 365-amino-acid chain: Peptide chain release factor 2 (365 aa).

At Gln-252 the chain carries N5-methylglutamine.

The protein belongs to the prokaryotic/mitochondrial release factor family. Post-translationally, methylated by PrmC. Methylation increases the termination efficiency of RF2.

It is found in the cytoplasm. In terms of biological role, peptide chain release factor 2 directs the termination of translation in response to the peptide chain termination codons UGA and UAA. This is Peptide chain release factor 2 from Shewanella baltica (strain OS223).